The chain runs to 293 residues: Elongation factor Ts (293 aa).

The involved in Mg(2+) ion dislocation from EF-Tu stretch occupies residues 79 to 82 (TDFV).

The protein belongs to the EF-Ts family.

It localises to the cytoplasm. Associates with the EF-Tu.GDP complex and induces the exchange of GDP to GTP. It remains bound to the aminoacyl-tRNA.EF-Tu.GTP complex up to the GTP hydrolysis stage on the ribosome. The protein is Elongation factor Ts of Bacillus pumilus (strain SAFR-032).